Here is a 90-residue protein sequence, read N- to C-terminus: uncharacterized protein (90 aa).

This is an uncharacterized protein from Haemophilus influenzae (strain ATCC 51907 / DSM 11121 / KW20 / Rd).